The sequence spans 216 residues: Probable inactive E3 ubiquitin-protein ligase SINAT6 (216 aa).

Residues 5-74 (INDLQVESRV…LLLHLRNDHN (70 aa)) form an SIAH-type zinc finger.

This sequence belongs to the SINA (Seven in absentia) family. In terms of assembly, homodimer. Interacts with SINAT1, SINAT2, SINAT3, SINAT4 and SINAT5. Interacts with ATG6 and TRAF1A. As to expression, expressed in roots, rosette leaves, cauline leaves, guard cells and flowers.

The protein localises to the cytoplasm. The protein resides in the nucleus. Probable inactive E3 ubiquitin-protein ligase that plays a role in regulation of autophagy. Upon starvation, involved in maintaining ATG6 homeostasis by competitively associating with ATG6, a component of the autophagosome complex. Acts as a positive regulator of drought stress response. Functions as a positive regulator of abscisic acid-mediated stomatal closure. The chain is Probable inactive E3 ubiquitin-protein ligase SINAT6 from Arabidopsis thaliana (Mouse-ear cress).